We begin with the raw amino-acid sequence, 610 residues long: Zinc finger protein 823 (610 aa).

The KRAB domain occupies 4-97 (VAFEDVAVNF…VNKNTPRVNP (94 aa)). 10 consecutive C2H2-type zinc fingers follow at residues 164-186 (FDCK…MAAH), 192-214 (YKCK…ERTH), 220-242 (YECK…ERIH), 248-270 (YECK…ERTH), 276-298 (YKCT…ERTH), 304-326 (YACK…MIRH), 332-354 (HKCK…ETTH), 360-382 (YECK…MITH), 388-410 (QKCK…ERTH), and 416-438 (YQCK…EATH). The C2H2-type 11; atypical zinc finger occupies 444 to 465 (YKCQCGKAFSDLSSFQNHETTH). C2H2-type zinc fingers lie at residues 471–493 (YECK…KRTH), 499–521 (YECK…ERIH), 527–549 (YECK…ERIH), 555–577 (YECL…EKTH), and 583–605 (YECK…KRTH).

The protein belongs to the krueppel C2H2-type zinc-finger protein family.

The protein localises to the nucleus. May be involved in transcriptional regulation. The polypeptide is Zinc finger protein 823 (ZNF823) (Homo sapiens (Human)).